A 369-amino-acid chain; its full sequence is MGLRKKSTKNPPVLSQEFILQNHADIVSCVGMFFLLGLVFEGTAEASIVFLTLQHSVAVPAAEEQATGSKSLYYYGVKDLATVFFYMLVAIIIHATIQEYVLDKINKRMQFTKAKQNKFNESGQFSVFYFFSCIWGTFILISENCLSDPTLIWKARPHSMMTFQMKFFYISQLAYWFHAFPELYFQKTKKQDIPRQLVYIGLHLFHITGAYLLYLNHLGLLLLVLHYFVELLSHMCGLFYFSDEKYQKGISLWAIVFILGRLVTLIVSVLTVGFHLAGSQNRNPDALTGNVNVLAAKIAVLSSSCTIQAYVTWNLITLWLQRWVEDSNIQASCMKKKRSRSSKKRTENGVGVETSNRVDCPPKRKEKSS.

Over 1–29 (MGLRKKSTKNPPVLSQEFILQNHADIVSC) the chain is Cytoplasmic. The chain crosses the membrane as a helical span at residues 30 to 50 (VGMFFLLGLVFEGTAEASIVF). Topologically, residues 51-81 (LTLQHSVAVPAAEEQATGSKSLYYYGVKDLA) are lumenal. Residues 82–102 (TVFFYMLVAIIIHATIQEYVL) form a helical membrane-spanning segment. Over 103 to 121 (DKINKRMQFTKAKQNKFNE) the chain is Cytoplasmic. The TLC domain maps to 117–326 (NKFNESGQFS…TLWLQRWVED (210 aa)). A helical membrane pass occupies residues 122–142 (SGQFSVFYFFSCIWGTFILIS). The Lumenal segment spans residues 143–164 (ENCLSDPTLIWKARPHSMMTFQ). Residues 165 to 185 (MKFFYISQLAYWFHAFPELYF) form a helical membrane-spanning segment. At 186–196 (QKTKKQDIPRQ) the chain is on the cytoplasmic side. Residues 197–215 (LVYIGLHLFHITGAYLLYL) traverse the membrane as a helical segment. Residues 216–219 (NHLG) are Lumenal-facing. A helical transmembrane segment spans residues 220–242 (LLLLVLHYFVELLSHMCGLFYFS). Over 243-249 (DEKYQKG) the chain is Cytoplasmic. A helical transmembrane segment spans residues 250–270 (ISLWAIVFILGRLVTLIVSVL). The Lumenal portion of the chain corresponds to 271 to 297 (TVGFHLAGSQNRNPDALTGNVNVLAAK). Residues 298–318 (IAVLSSSCTIQAYVTWNLITL) traverse the membrane as a helical segment. Topologically, residues 319-369 (WLQRWVEDSNIQASCMKKKRSRSSKKRTENGVGVETSNRVDCPPKRKEKSS) are cytoplasmic. Residues 335 to 369 (KKKRSRSSKKRTENGVGVETSNRVDCPPKRKEKSS) form a disordered region. Residues 360–369 (CPPKRKEKSS) show a composition bias toward basic and acidic residues.

Belongs to the TRAM family.

The protein resides in the endoplasmic reticulum membrane. Functionally, stimulatory or required for the translocation of secretory proteins across the ER membrane. This Homo sapiens (Human) protein is Translocating chain-associated membrane protein 1-like 1 (TRAM1L1).